Reading from the N-terminus, the 115-residue chain is Mediator of RNA polymerase II transcription subunit 22 (115 aa).

It belongs to the Mediator complex subunit 22 family. As to quaternary structure, component of the Mediator complex.

It localises to the nucleus. Component of the Mediator complex, a coactivator involved in the regulated transcription of nearly all RNA polymerase II-dependent genes. Mediator functions as a bridge to convey information from gene-specific regulatory proteins to the basal RNA polymerase II transcription machinery. Mediator is recruited to promoters by direct interactions with regulatory proteins and serves as a scaffold for the assembly of a functional preinitiation complex with RNA polymerase II and the general transcription factors. The chain is Mediator of RNA polymerase II transcription subunit 22 (SRB6) from Candida albicans (strain SC5314 / ATCC MYA-2876) (Yeast).